The following is a 180-amino-acid chain: Small ribosomal subunit protein uS4 (180 aa).

The S4 RNA-binding domain maps to 103-165 (RRLQTLVYKK…KNSPFAKESH (63 aa)).

This sequence belongs to the universal ribosomal protein uS4 family. Part of the 30S ribosomal subunit. Contacts protein S5. The interaction surface between S4 and S5 is involved in control of translational fidelity.

In terms of biological role, one of the primary rRNA binding proteins, it binds directly to 16S rRNA where it nucleates assembly of the body of the 30S subunit. Its function is as follows. With S5 and S12 plays an important role in translational accuracy. This is Small ribosomal subunit protein uS4 from Thermococcus gammatolerans (strain DSM 15229 / JCM 11827 / EJ3).